Consider the following 142-residue polypeptide: Large ribosomal subunit protein uL11 (142 aa).

It belongs to the universal ribosomal protein uL11 family. Part of the ribosomal stalk of the 50S ribosomal subunit. Interacts with L10 and the large rRNA to form the base of the stalk. L10 forms an elongated spine to which L12 dimers bind in a sequential fashion forming a multimeric L10(L12)X complex. Post-translationally, one or more lysine residues are methylated.

Forms part of the ribosomal stalk which helps the ribosome interact with GTP-bound translation factors. In Xanthomonas campestris pv. campestris (strain B100), this protein is Large ribosomal subunit protein uL11.